The primary structure comprises 331 residues: Biotin synthase (331 aa).

The region spanning 52–277 is the Radical SAM core domain; it reads PEVEVEGIVS…RTILRYAGGR (226 aa). [4Fe-4S] cluster is bound by residues Cys67, Cys71, and Cys74. [2Fe-2S] cluster is bound by residues Cys110, Cys202, and Arg272.

The protein belongs to the radical SAM superfamily. Biotin synthase family. In terms of assembly, homodimer. The cofactor is [4Fe-4S] cluster. Requires [2Fe-2S] cluster as cofactor.

It catalyses the reaction (4R,5S)-dethiobiotin + (sulfur carrier)-SH + 2 reduced [2Fe-2S]-[ferredoxin] + 2 S-adenosyl-L-methionine = (sulfur carrier)-H + biotin + 2 5'-deoxyadenosine + 2 L-methionine + 2 oxidized [2Fe-2S]-[ferredoxin]. It participates in cofactor biosynthesis; biotin biosynthesis; biotin from 7,8-diaminononanoate: step 2/2. Functionally, catalyzes the conversion of dethiobiotin (DTB) to biotin by the insertion of a sulfur atom into dethiobiotin via a radical-based mechanism. The polypeptide is Biotin synthase (Salinispora arenicola (strain CNS-205)).